We begin with the raw amino-acid sequence, 1133 residues long: Protein TPR3 (1133 aa).

In terms of domain architecture, LisH spans 4–36; that stretch reads LSRELVFLILQFLDEEKFKETVHKLEQESGFYF. One can recognise a CTLH domain in the interval 34–92; it reads FYFNMKYFEDEVINGNWDEVERYLGGFTKVDDNRYSMKIFFEIRKQKYLEALDKHDRSK. Residues 287 to 307 are disordered; the sequence is PTTANPSMDYPSGDSDHVSKR. WD repeat units follow at residues 348–388, 410–449, 455–496, 499–540, 543–586, 590–629, 634–673, 771–810, 837–875, 878–918, 921–960, and 1014–1053; these read SQGS…RLVL, DPTV…DIRQ, AHVG…KQFT, GHEA…SRVD, APGH…VKRT, FRKR…LLTT, GGLP…RLLR, MRTS…RNSS, NPEE…TMTT, PPPP…VKSK, GHSK…KLKS, and ENSS…LQCR. Residues 1099 to 1133 form a disordered region; sequence ESERKWGNPPPAENGSTSALSTPPNGASSSDQPER. A compositionally biased stretch (polar residues) spans 1112-1133; the sequence is NGSTSALSTPPNGASSSDQPER.

As to quaternary structure, tetramer. Interacts with D53. Interacts with MODD and HDAC1. Interacts with WOX1. Interacts with MOF1. Expressed in panicles, stems, leaves, spikelets and seed endosperm.

In terms of biological role, probable downstream regulator of strigolactones signaling. Functions in a complex with MODD and HDAC1 to down-regulate the histone acetylation level at BZIP46 target genes. BZIP46 is a positive regulator of abscisic acid (ABA) signaling and drought stress tolerance. The chain is Protein TPR3 from Oryza sativa subsp. japonica (Rice).